Reading from the N-terminus, the 395-residue chain is Testis-expressed protein 44 (395 aa).

4 disordered regions span residues 1-32 (MALP…PLTA), 46-100 (WQDI…LQVS), 133-215 (KMSQ…SDES), and 235-258 (FPPP…GRRP). Over residues 53–65 (SFKTATPRAISTS) the composition is skewed to polar residues. The segment covering 87-98 (PLLPSQNPSPLQ) has biased composition (low complexity). Over residues 192–207 (SAEEKAEHPKAPHPEA) the composition is skewed to basic and acidic residues. Serine 333 is modified (phosphoserine).

In terms of tissue distribution, testis. Detected in germ cells at all stages of the seminiferous epithelium, strong expression in elongating spermatids (at protein level).

It is found in the cytoplasm. The protein is Testis-expressed protein 44 of Homo sapiens (Human).